We begin with the raw amino-acid sequence, 64 residues long: Prokaryotic ubiquitin-like protein Pup (64 aa).

The interval M1–D37 is disordered. The interval D21 to Y58 is ARC ATPase binding. The stretch at A24–E52 forms a coiled coil. Q64 is modified (deamidated glutamine). An Isoglutamyl lysine isopeptide (Gln-Lys) (interchain with K-? in acceptor proteins) cross-link involves residue Q64.

This sequence belongs to the prokaryotic ubiquitin-like protein family. In terms of assembly, strongly interacts with the proteasome-associated ATPase ARC through a hydrophobic interface; the interacting region of Pup lies in its C-terminal half. There is one Pup binding site per ARC hexamer ring. Post-translationally, is modified by deamidation of its C-terminal glutamine to glutamate by the deamidase Dop, a prerequisite to the subsequent pupylation process.

It participates in protein degradation; proteasomal Pup-dependent pathway. Its function is as follows. Protein modifier that is covalently attached to lysine residues of substrate proteins, thereby targeting them for proteasomal degradation. The tagging system is termed pupylation. This Rhodococcus erythropolis (strain PR4 / NBRC 100887) protein is Prokaryotic ubiquitin-like protein Pup.